Consider the following 249-residue polypeptide: Putative ABC transporter ATP-binding protein GSU1281 (249 aa).

Residues 6 to 236 (VEVRDLCHCY…DELLATCRLE (231 aa)) enclose the ABC transporter domain. 39-46 (GANGAGKS) is an ATP binding site.

This sequence belongs to the ABC transporter superfamily.

Its subcellular location is the cell inner membrane. Functionally, probably part of an ABC transporter complex. Responsible for energy coupling to the transport system. The polypeptide is Putative ABC transporter ATP-binding protein GSU1281 (Geobacter sulfurreducens (strain ATCC 51573 / DSM 12127 / PCA)).